The sequence spans 254 residues: Alcohol dehydrogenase (254 aa).

10–33 (FVAGLGGIGLDTSRELVKRDLKNL) contacts NAD(+). Substrate is bound at residue S138. Y151 (proton acceptor) is an active-site residue.

It belongs to the short-chain dehydrogenases/reductases (SDR) family. As to quaternary structure, homodimer.

The enzyme catalyses a primary alcohol + NAD(+) = an aldehyde + NADH + H(+). It catalyses the reaction a secondary alcohol + NAD(+) = a ketone + NADH + H(+). The chain is Alcohol dehydrogenase (Adh) from Drosophila guanche (Fruit fly).